The primary structure comprises 289 residues: Glycerol facilitator-aquaporin gla (289 aa).

Transmembrane regions (helical) follow at residues 10–30 and 41–61; these read ITEF…VANV and SWMI…VAFG. Positions 68–70 match the NPA 1 motif; sequence NPA. Transmembrane regions (helical) follow at residues 87–107, 151–171, and 209–229; these read AQYI…IVMV, FVGS…FFGS, and MVAH…LGGP. The NPA 2 signature appears at 235–237; it reads NPA. A helical transmembrane segment spans residues 264 to 284; the sequence is WYAWVPVLAPILASLAAVALF.

The protein belongs to the MIP/aquaporin (TC 1.A.8) family.

The protein resides in the cell membrane. Functionally, mixed channel protein that transports both water and glycerol. The polypeptide is Glycerol facilitator-aquaporin gla (gla) (Lactococcus lactis subsp. lactis (strain IL1403) (Streptococcus lactis)).